A 141-amino-acid chain; its full sequence is Large ribosomal subunit protein uL11 (141 aa).

It belongs to the universal ribosomal protein uL11 family. Part of the ribosomal stalk of the 50S ribosomal subunit. Interacts with L10 and the large rRNA to form the base of the stalk. L10 forms an elongated spine to which L12 dimers bind in a sequential fashion forming a multimeric L10(L12)X complex. One or more lysine residues are methylated.

Its function is as follows. Forms part of the ribosomal stalk which helps the ribosome interact with GTP-bound translation factors. This chain is Large ribosomal subunit protein uL11, found in Microcystis aeruginosa (strain NIES-843 / IAM M-2473).